Consider the following 317-residue polypeptide: Beta-ketoacyl-[acyl-carrier-protein] synthase III (317 aa).

Catalysis depends on residues Cys112 and His244. The interval 245–249 is ACP-binding; sequence QANVR. Asn274 is an active-site residue.

This sequence belongs to the thiolase-like superfamily. FabH family. Homodimer.

It is found in the cytoplasm. The enzyme catalyses malonyl-[ACP] + acetyl-CoA + H(+) = 3-oxobutanoyl-[ACP] + CO2 + CoA. Its pathway is lipid metabolism; fatty acid biosynthesis. Functionally, catalyzes the condensation reaction of fatty acid synthesis by the addition to an acyl acceptor of two carbons from malonyl-ACP. Catalyzes the first condensation reaction which initiates fatty acid synthesis and may therefore play a role in governing the total rate of fatty acid production. Possesses both acetoacetyl-ACP synthase and acetyl transacylase activities. Its substrate specificity determines the biosynthesis of branched-chain and/or straight-chain of fatty acids. This Rickettsia canadensis (strain McKiel) protein is Beta-ketoacyl-[acyl-carrier-protein] synthase III.